The sequence spans 557 residues: Dihydroxy-acid dehydratase (557 aa).

Aspartate 78 lines the Mg(2+) pocket. Cysteine 119 lines the [2Fe-2S] cluster pocket. Aspartate 120 and lysine 121 together coordinate Mg(2+). Lysine 121 is modified (N6-carboxylysine). Cysteine 192 contributes to the [2Fe-2S] cluster binding site. Glutamate 442 is a binding site for Mg(2+). Serine 468 serves as the catalytic Proton acceptor.

Belongs to the IlvD/Edd family. As to quaternary structure, homodimer. [2Fe-2S] cluster serves as cofactor. Requires Mg(2+) as cofactor.

The enzyme catalyses (2R)-2,3-dihydroxy-3-methylbutanoate = 3-methyl-2-oxobutanoate + H2O. The catalysed reaction is (2R,3R)-2,3-dihydroxy-3-methylpentanoate = (S)-3-methyl-2-oxopentanoate + H2O. The protein operates within amino-acid biosynthesis; L-isoleucine biosynthesis; L-isoleucine from 2-oxobutanoate: step 3/4. It functions in the pathway amino-acid biosynthesis; L-valine biosynthesis; L-valine from pyruvate: step 3/4. In terms of biological role, functions in the biosynthesis of branched-chain amino acids. Catalyzes the dehydration of (2R,3R)-2,3-dihydroxy-3-methylpentanoate (2,3-dihydroxy-3-methylvalerate) into 2-oxo-3-methylpentanoate (2-oxo-3-methylvalerate) and of (2R)-2,3-dihydroxy-3-methylbutanoate (2,3-dihydroxyisovalerate) into 2-oxo-3-methylbutanoate (2-oxoisovalerate), the penultimate precursor to L-isoleucine and L-valine, respectively. In Bacillus thuringiensis subsp. konkukian (strain 97-27), this protein is Dihydroxy-acid dehydratase.